A 521-amino-acid polypeptide reads, in one-letter code: NAD(P)H-quinone oxidoreductase subunit 2 (521 aa).

Transmembrane regions (helical) follow at residues 15-35 (ILPE…DITF), 42-62 (WTPY…YTQW), 79-99 (LSIV…LMSV), 109-126 (IGEF…AMFL), 131-153 (ELVM…TGYM), 167-187 (LLIG…LYGL), 208-228 (LALV…IAAV), 242-262 (PTPV…ALAI), 276-296 (WQFI…VVAI), 304-324 (MLAY…VIGT), 332-352 (VFYL…VILF), 376-396 (LALS…GFFG), 398-418 (LYLF…LGLI), and 464-484 (VGLV…NPLL).

Belongs to the complex I subunit 2 family. In terms of assembly, NDH-1 can be composed of about 15 different subunits; different subcomplexes with different compositions have been identified which probably have different functions.

The protein localises to the cellular thylakoid membrane. The enzyme catalyses a plastoquinone + NADH + (n+1) H(+)(in) = a plastoquinol + NAD(+) + n H(+)(out). It catalyses the reaction a plastoquinone + NADPH + (n+1) H(+)(in) = a plastoquinol + NADP(+) + n H(+)(out). Its function is as follows. NDH-1 shuttles electrons from an unknown electron donor, via FMN and iron-sulfur (Fe-S) centers, to quinones in the respiratory and/or the photosynthetic chain. The immediate electron acceptor for the enzyme in this species is believed to be plastoquinone. Couples the redox reaction to proton translocation, and thus conserves the redox energy in a proton gradient. Cyanobacterial NDH-1 also plays a role in inorganic carbon-concentration. The protein is NAD(P)H-quinone oxidoreductase subunit 2 of Acaryochloris marina (strain MBIC 11017).